The chain runs to 549 residues: CTP synthase (549 aa).

An amidoligase domain region spans residues 1–270 (MTKFVFVTGG…DRLICEELRL (270 aa)). S13 serves as a coordination point for CTP. S13 contributes to the UTP binding site. ATP-binding positions include 14-19 (SLGKGI) and D71. Mg(2+) is bound by residues D71 and E144. CTP contacts are provided by residues 151–153 (DIE), 191–196 (KTKPTQ), and K227. UTP is bound by residues 191 to 196 (KTKPTQ) and K227. A Glutamine amidotransferase type-1 domain is found at 295-547 (TIGMVGKYVD…VEAALAAQRQ (253 aa)). Position 356 (G356) interacts with L-glutamine. The active-site Nucleophile; for glutamine hydrolysis is the C383. Residues 384-387 (LGMQ), E407, and R473 contribute to the L-glutamine site. Catalysis depends on residues H520 and E522.

This sequence belongs to the CTP synthase family. Homotetramer.

The enzyme catalyses UTP + L-glutamine + ATP + H2O = CTP + L-glutamate + ADP + phosphate + 2 H(+). The catalysed reaction is L-glutamine + H2O = L-glutamate + NH4(+). It carries out the reaction UTP + NH4(+) + ATP = CTP + ADP + phosphate + 2 H(+). It functions in the pathway pyrimidine metabolism; CTP biosynthesis via de novo pathway; CTP from UDP: step 2/2. With respect to regulation, allosterically activated by GTP, when glutamine is the substrate; GTP has no effect on the reaction when ammonia is the substrate. The allosteric effector GTP functions by stabilizing the protein conformation that binds the tetrahedral intermediate(s) formed during glutamine hydrolysis. Inhibited by the product CTP, via allosteric rather than competitive inhibition. Functionally, catalyzes the ATP-dependent amination of UTP to CTP with either L-glutamine or ammonia as the source of nitrogen. Regulates intracellular CTP levels through interactions with the four ribonucleotide triphosphates. The sequence is that of CTP synthase from Cupriavidus metallidurans (strain ATCC 43123 / DSM 2839 / NBRC 102507 / CH34) (Ralstonia metallidurans).